We begin with the raw amino-acid sequence, 261 residues long: UPF0328 protein ECU06_0100 (261 aa).

This sequence belongs to the UPF0328 family.

The polypeptide is UPF0328 protein ECU06_0100 (Encephalitozoon cuniculi (strain GB-M1) (Microsporidian parasite)).